The primary structure comprises 148 residues: SUMO-conjugating enzyme UBC9 (148 aa).

Residues 1–147 enclose the UBC core domain; sequence MASKRILKEL…ARTWTQKYAM (147 aa). The active-site Glycyl thioester intermediate is Cys-85.

It belongs to the ubiquitin-conjugating enzyme family. As to quaternary structure, interacts with CHIP. In terms of tissue distribution, highest expression in young stems and old leaves. Lowest levels in floral buds, anthers and young leaves.

It participates in protein modification; protein sumoylation. Its function is as follows. Accepts the ubiquitin-like protein SUMO/SMT3 from the E1 complex and catalyzes its covalent attachment to other proteins. Mediates the selective degradation of short-lived and abnormal proteins. In Arabidopsis thaliana (Mouse-ear cress), this protein is SUMO-conjugating enzyme UBC9 (UBC9).